The chain runs to 694 residues: Elongation factor G (694 aa).

The tr-type G domain maps to 8-287 (EDYRNFGIMA…AVISYLPSPV (280 aa)). GTP contacts are provided by residues 17–24 (AHIDAGKT), 86–90 (DTPGH), and 140–143 (NKMD).

It belongs to the TRAFAC class translation factor GTPase superfamily. Classic translation factor GTPase family. EF-G/EF-2 subfamily.

It localises to the cytoplasm. Its function is as follows. Catalyzes the GTP-dependent ribosomal translocation step during translation elongation. During this step, the ribosome changes from the pre-translocational (PRE) to the post-translocational (POST) state as the newly formed A-site-bound peptidyl-tRNA and P-site-bound deacylated tRNA move to the P and E sites, respectively. Catalyzes the coordinated movement of the two tRNA molecules, the mRNA and conformational changes in the ribosome. The polypeptide is Elongation factor G (Bartonella quintana (strain Toulouse) (Rochalimaea quintana)).